The sequence spans 652 residues: MRHLLLALLLLGGARADDEEKKEDVGTVVGIDLGTTYSCVGVFKNGRVEIIANDQGNRITPSYVAFTPEGERLIGDAAKNQLTSNPENTVFDAKRLIGRTWNDPSVQQDIKYLPFKVVEKKAKPHIQVDVGGGQTKTFAPEEISAMVLTKMKETAEAYLGKKVTHAVVTVPAYFNDAQRQATKDAGTIAGLNVMRIINEPTAAAIAYGLDKREGEKNILVFDLGGGTFDVSLLTIDNGVFEVVATNGDTHLGGEDFDQRVMEHFIKLYKKKTGKDVRKDNRAVQKLRREVEKAKRALSSQHQARIEIESFFEGEDFSETLTRAKFEELNMDLFRSTMKPVQKVLEDSDLKKSDIDEIVLVGGSTRIPKIQQLVKEFFNGKEPSRGINPDEAVAYGAAVQAGVLSGDQDTGDLVLLDVCPLTLGIETVGGVMTKLIPRNTVVPTKKSQIFSTASDNQPTVTIKVYEGERPLTKDNHLLGTFDLTGIPPAPRGVPQIEVTFEIDVNGILRVTAEDKGTGNKNKITITNDQNRLTPEEIERMVNDAEKFAEEDKKLKERIDARNELESYAYSLKNQIGDKEKLGGKLSSEDKETIEKAVEEKIEWLESHQDADIEDFKSKKKELEEVVQPIVSKLYGSAGPPPTGEEEAAEKDEL.

The signal sequence occupies residues 1 to 16; sequence MRHLLLALLLLGGARA. Residues 34–37, K94, 225–227, 291–298, and 362–365 contribute to the ATP site; these read GTTY, GGT, EKAKRALS, and GSTR. A nucleotide-binding (NBD) region spans residues 123-278; it reads KPHIQVDVGG…KKKTGKDVRK (156 aa). The tract at residues 407–417 is interdomain linker; the sequence is QDTGDLVLLDV. Residues 418-498 form a substrate-binding (SBD) region; that stretch reads CPLTLGIETV…PRGVPQIEVT (81 aa). A disordered region spans residues 630–652; the sequence is SKLYGSAGPPPTGEEEAAEKDEL. Residues 642 to 652 are compositionally biased toward acidic residues; it reads GEEEAAEKDEL. Positions 649–652 match the Prevents secretion from ER motif; sequence KDEL.

Belongs to the heat shock protein 70 family. In terms of assembly, monomer and homooligomer; homooligomerization via the interdomain linker inactivates the chaperone activity and acts as a storage of HSPA5/BiP molecules. Interacts with DNAJC10. Interacts with DNAJB9/ERdj4; leading to recruit HSPA5/BiP to ERN1/IRE1. Interacts with ERN1/IRE1; interaction takes place following interaction with DNAJB9/ERdj4 and leads to inactivate ERN1/IRE1.

The protein localises to the endoplasmic reticulum lumen. The protein resides in the melanosome. It is found in the cytoplasm. It localises to the cell surface. The catalysed reaction is ATP + H2O = ADP + phosphate + H(+). Its activity is regulated as follows. The chaperone activity is regulated by ATP-induced allosteric coupling of the nucleotide-binding (NBD) and substrate-binding (SBD) domains. In the ADP-bound and nucleotide-free (apo) states, the two domains have little interaction. In contrast, in the ATP-bound state the two domains are tightly coupled, which results in drastically accelerated kinetics in both binding and release of polypeptide substrates. J domain-containing co-chaperones (DNAJB9/ERdj4 or DNAJC10/ERdj5) stimulate the ATPase activity and are required for efficient substrate recognition by HSPA5/BiP. Homooligomerization inactivates participating HSPA5/BiP protomers and probably act as reservoirs to store HSPA5/BiP molecules when they are not needed by the cell. Endoplasmic reticulum chaperone that plays a key role in protein folding and quality control in the endoplasmic reticulum lumen. Involved in the correct folding of proteins and degradation of misfolded proteins via its interaction with DNAJC10/ERdj5, probably to facilitate the release of DNAJC10/ERdj5 from its substrate. Acts as a key repressor of the EIF2AK3/PERK and ERN1/IRE1-mediated unfolded protein response (UPR). In the unstressed endoplasmic reticulum, recruited by DNAJB9/ERdj4 to the luminal region of ERN1/IRE1, leading to disrupt the dimerization of ERN1/IRE1, thereby inactivating ERN1/IRE1. Also binds and inactivates EIF2AK3/PERK in unstressed cells. Accumulation of misfolded protein in the endoplasmic reticulum causes release of HSPA5/BiP from ERN1/IRE1 and EIF2AK3/PERK, allowing their homodimerization and subsequent activation. May also play a role in apoptosis and cell proliferation. The polypeptide is Endoplasmic reticulum chaperone BiP (Gallus gallus (Chicken)).